The sequence spans 453 residues: Bifunctional protein GlmU (453 aa).

The tract at residues 1 to 226 (MKFSAVILAA…PIEVEGVNDR (226 aa)) is pyrophosphorylase. UDP-N-acetyl-alpha-D-glucosamine-binding positions include 8 to 11 (LAAG), lysine 22, glutamine 73, 78 to 79 (GT), 100 to 102 (YGD), glycine 137, glutamate 151, asparagine 166, and asparagine 224. Aspartate 102 is a Mg(2+) binding site. Asparagine 224 is a Mg(2+) binding site. The linker stretch occupies residues 227–247 (AQLARLERAFQAAQAKKLLEQ). The segment at 248–453 (GVMLRDPARF…TGWQRPVKKK (206 aa)) is N-acetyltransferase. The UDP-N-acetyl-alpha-D-glucosamine site is built by arginine 330 and lysine 348. The Proton acceptor role is filled by histidine 360. Residues tyrosine 363 and asparagine 374 each contribute to the UDP-N-acetyl-alpha-D-glucosamine site. Residues alanine 377, 383–384 (NY), serine 402, alanine 420, and arginine 437 contribute to the acetyl-CoA site.

It in the N-terminal section; belongs to the N-acetylglucosamine-1-phosphate uridyltransferase family. In the C-terminal section; belongs to the transferase hexapeptide repeat family. Homotrimer. It depends on Mg(2+) as a cofactor.

The protein resides in the cytoplasm. The enzyme catalyses alpha-D-glucosamine 1-phosphate + acetyl-CoA = N-acetyl-alpha-D-glucosamine 1-phosphate + CoA + H(+). It catalyses the reaction N-acetyl-alpha-D-glucosamine 1-phosphate + UTP + H(+) = UDP-N-acetyl-alpha-D-glucosamine + diphosphate. It participates in nucleotide-sugar biosynthesis; UDP-N-acetyl-alpha-D-glucosamine biosynthesis; N-acetyl-alpha-D-glucosamine 1-phosphate from alpha-D-glucosamine 6-phosphate (route II): step 2/2. Its pathway is nucleotide-sugar biosynthesis; UDP-N-acetyl-alpha-D-glucosamine biosynthesis; UDP-N-acetyl-alpha-D-glucosamine from N-acetyl-alpha-D-glucosamine 1-phosphate: step 1/1. The protein operates within bacterial outer membrane biogenesis; LPS lipid A biosynthesis. Its function is as follows. Catalyzes the last two sequential reactions in the de novo biosynthetic pathway for UDP-N-acetylglucosamine (UDP-GlcNAc). The C-terminal domain catalyzes the transfer of acetyl group from acetyl coenzyme A to glucosamine-1-phosphate (GlcN-1-P) to produce N-acetylglucosamine-1-phosphate (GlcNAc-1-P), which is converted into UDP-GlcNAc by the transfer of uridine 5-monophosphate (from uridine 5-triphosphate), a reaction catalyzed by the N-terminal domain. The sequence is that of Bifunctional protein GlmU from Vibrio vulnificus (strain YJ016).